The following is a 424-amino-acid chain: PtdIns3K complex I subunit atg38 (424 aa).

The stretch at 50–78 (LIKRCANNQIEELMVRIRELRESLPNKQT) forms a coiled coil. The interval 73–212 (LPNKQTPISM…DPAYQNTNEQ (140 aa)) is required for interaction with atg8. Residues 178–181 (FLIV) carry the AIM motif. Residues 268-284 (LSEEEMGRSHKREESFK) are compositionally biased toward basic and acidic residues. The segment at 268-299 (LSEEEMGRSHKREESFKRAFGHASSSESSIGE) is disordered. Residues 390–420 (TVDSQLKIKQLETQIATLQKQLEQFQTSTLD) adopt a coiled-coil conformation.

Belongs to the ATG38 family. Component of the autophagy-specific vps34 PI3-kinase complex I composed of vps15, atg6, pik3/vps34, atg14 and atg38. Interacts (via AIM motif) with atg8; the interaction is direct and leads to recruitment of the autophagy-specific vps34 PI3-kinase complex I to the phagophore assembly site.

The protein localises to the preautophagosomal structure membrane. It localises to the cytoplasm. It is found in the cytosol. Functions as a part of the autophagy-specific VPS34 PI3-kinase complex I that plays a role in autophagosome assembly. This complex is essential to recruit the atg8-phosphatidylinositol conjugate and the atg12-atg5 conjugate to the pre-autophagosomal structure. By binding to atg8 at the phagophore assembly site, atg38 helps establish a positive feedback loop for recruitment of phagophore assembly proteins, including atg8. This chain is PtdIns3K complex I subunit atg38, found in Schizosaccharomyces pombe (strain 972 / ATCC 24843) (Fission yeast).